The primary structure comprises 191 residues: Calcium and integrin-binding protein 1 (191 aa).

Glycine 2 carries N-myristoyl glycine lipidation. 2 consecutive EF-hand domains span residues 103–138 (TPDIKSHYAFRIFDFDDDGTLNREDLSQLVNCLTGE) and 148–183 (EMKQLIDNILEESDIDRDGTINLSEFQHVISRSPDF). Residues aspartate 116, aspartate 118, aspartate 120, threonine 122, aspartate 127, aspartate 161, aspartate 163, aspartate 165, threonine 167, and glutamate 172 each coordinate Ca(2+).

As to quaternary structure, monomer. Interacts with the heterodimeric integrin alpha-IIb/beta3 (ITGA2B-ITGB3). Interacts with ITGA2B (via cytoplasmic domain); the interaction is direct and calcium-dependent. Interacts with the protein kinases PLK2/SNK and PRKDC (via the region immediately upstream of the kinase domain). Interacts with PLK3; the interaction inhibits PLK3 kinase activity. Interacts with PSEN2. Interacts (via C-terminus) with F8. Interacts with NBR1 (via C-terminus). Interacts with FEZ1 (via C-terminus). Interacts with UBR5 (via C-terminus); the interaction is sensitive to DNA damage, and may target CIB1 for ubiquitin-mediated degradation. Interacts with IFI6; the interaction is direct. Interacts with BCL2. Interacts with ITPR3; the interaction occurs in a calcium dependent manner. Interacts with PTK2/FAK1. Interacts with MAP3K5; the interaction inhibits MAP3K5 activation by phosphorylation, and its subsequent interaction with TRAF2. Interacts (via C-terminal region) with STMN2 (via the N-terminal region); the interaction is direct, occurs in a calcium-dependent manner and attenuates the STMN2-induced neurite outgrowth inhibition. Interacts with SPHK1, the interaction occurs in a calcium-dependent manner. Interacts with ITGA2B (via C-terminal cytoplasmic tail); the interaction occurs upon platelet aggregation and is stabilized/increased in a calcium and magnesium-dependent manner. Interacts with PAK1 (via N-terminal region); the interaction is direct and occurs in a calcium-dependent manner. Interacts with RAC3 (via C-terminal region); the interaction induces their association with the cytoskeleton upon alpha-IIb/beta3 integrin-mediated adhesion. Interacts with ITGA5 and ITGAV. Interacts with MYO1C. Interacts with ITGA2B (via C-terminal cytoplasmic tail region). Interacts (via C-terminal region) with PPP3R1; the interaction increases upon cardiomyocytes hypertrophy. Interacts with CACNA1C; the interaction increases upon cardiomyocytes hypertrophy. Interacts with TAS1R2 (via C-terminus); this interaction is independent of the myristoylation state of CIB1. Interacts and forms a complex with TMC6 and TMC8; the interaction stabilizes each component of the complex.

It localises to the membrane. The protein localises to the cell membrane. Its subcellular location is the sarcolemma. The protein resides in the apical cell membrane. It is found in the cell projection. It localises to the ruffle membrane. The protein localises to the filopodium tip. Its subcellular location is the growth cone. The protein resides in the lamellipodium. It is found in the cytoplasm. It localises to the cytoskeleton. The protein localises to the microtubule organizing center. Its subcellular location is the centrosome. The protein resides in the perinuclear region. It is found in the nucleus. It localises to the neuron projection. The protein localises to the perikaryon. In terms of biological role, calcium-binding protein that plays a role in the regulation of numerous cellular processes, such as cell differentiation, cell division, cell proliferation, cell migration, thrombosis, angiogenesis, cardiac hypertrophy and apoptosis. Involved in bone marrow megakaryocyte differentiation by negatively regulating thrombopoietin-mediated signaling pathway. Participates in the endomitotic cell cycle of megakaryocyte, a form of mitosis in which both karyokinesis and cytokinesis are interrupted. Plays a role in integrin signaling by negatively regulating alpha-IIb/beta3 activation in thrombin-stimulated megakaryocytes preventing platelet aggregation. Up-regulates PTK2/FAK1 activity, and is also needed for the recruitment of PTK2/FAK1 to focal adhesions; it thus appears to play an important role in focal adhesion formation. Positively regulates cell migration on fibronectin in a CDC42-dependent manner, the effect being negatively regulated by PAK1. Functions as a negative regulator of stress activated MAP kinase (MAPK) signaling pathways. Down-regulates inositol 1,4,5-trisphosphate receptor-dependent calcium signaling. Involved in sphingosine kinase SPHK1 translocation to the plasma membrane in a N-myristoylation-dependent manner preventing TNF-alpha-induced apoptosis. Regulates serine/threonine-protein kinase PLK3 activity for proper completion of cell division progression. Plays a role in microtubule (MT) dynamics during neuronal development; disrupts the MT depolymerization activity of STMN2 attenuating NGF-induced neurite outgrowth and the MT reorganization at the edge of lamellipodia. Promotes cardiomyocyte hypertrophy via activation of the calcineurin/NFAT signaling pathway. Stimulates calcineurin PPP3R1 activity by mediating its anchoring to the sarcolemma. In ischemia-induced (pathological or adaptive) angiogenesis, stimulates endothelial cell proliferation, migration and microvessel formation by activating the PAK1 and ERK1/ERK2 signaling pathway. Also promotes cancer cell survival and proliferation. May regulate cell cycle and differentiation of spermatogenic germ cells, and/or differentiation of supporting Sertoli cells. Forms a complex with TMC6/EVER1 and TMC8/EVER2 in lymphocytes and keratynocytes where CIB1 stabilizes TMC6 and TMC8 levels and reciprocally. This is Calcium and integrin-binding protein 1 (CIB1) from Bos taurus (Bovine).